Reading from the N-terminus, the 320-residue chain is V-set and transmembrane domain-containing protein 4 (320 aa).

Residues 1 to 23 (MRLLALAAAALLARAPAPEVCAA) form the signal peptide. The region spanning 24 to 155 (LNVTVSPGPV…SSATEMRVIS (132 aa)) is the Ig-like domain. The Extracellular segment spans residues 24 to 180 (LNVTVSPGPV…WAFFEDLYVY (157 aa)). Residues asparagine 25, asparagine 41, asparagine 89, and asparagine 144 are each glycosylated (N-linked (GlcNAc...) asparagine). A disulfide bond links cysteine 46 and cysteine 127. The helical transmembrane segment at 181-201 (AVLVCCVGILSILLFMLVIVW) threads the bilayer. Over 202 to 320 (QSVFNKRKSR…AQILFEENKL (119 aa)) the chain is Cytoplasmic.

In terms of processing, proteolytically cleaved to generate a bioactive peptide.

The protein localises to the secreted. It localises to the cell membrane. In terms of biological role, peptide Lv enhances L-type voltage-gated calcium channel (L-VGCC) currents in retinal photoreceptors. The sequence is that of V-set and transmembrane domain-containing protein 4 (VSTM4) from Homo sapiens (Human).